We begin with the raw amino-acid sequence, 1121 residues long: Piwi-like protein ergo-1 (1121 aa).

Residues 1–14 (MSYNNGGGGGGGGY) show a composition bias toward gly residues. The segment at 1 to 134 (MSYNNGGGGG…GNRGGGGGRV (134 aa)) is disordered. Composition is skewed to basic and acidic residues over residues 15 to 29 (RNDR…DRQN) and 40 to 77 (YNDD…DRRG). The segment covering 99–112 (GSNQRNDNYGNNRG) has biased composition (polar residues). Over residues 125-134 (GNRGGGGGRV) the composition is skewed to gly residues. The 109-residue stretch at 426-534 (VMTQILTKMT…MPLELVSYIV (109 aa)) folds into the PAZ domain. A Piwi domain is found at 774 to 1081 (NVLKYLADNK…AAKRAKETLD (308 aa)).

Belongs to the argonaute family. Piwi subfamily. In terms of assembly, interacts with rde-12. Interacts with rde-10. Highly expressed in the germline in hermaphrodites.

Its subcellular location is the cytoplasm. In terms of biological role, argonaute protein required for gene silencing in the endogenous RNA interference (RNAi) pathway. Involved in the 26G RNAi pathway and associates with both unmethylated and methylated 26G small interfering RNAs (26G-siRNAs), which are a class of 26 nucleotide siRNAs that possess a guanine residue at the 5'-end. Associated 26G-siRNAs are methylated by the methyltransferase henn-1, which stabilizes the siRNAs. Association with 26G-siRNAs is required for the biogenesis of secondary 22G-siRNAs (a class of 22 nucleotide siRNAs that possess a triphosphorylated guanine residue at the 5'-end). May be involved in passenger strand cleavage of target 26G-siRNAs. The protein is Piwi-like protein ergo-1 of Caenorhabditis elegans.